Consider the following 149-residue polypeptide: Calmodulin-like protein 3 (149 aa).

EF-hand domains follow at residues 8–43 (EQVTEFKEAFSLFDKDGDGCITTRELGTVMRSLGQN), 44–79 (PTEAELRDMMSEIDRDGNGTVDFPEFLGMMARKMKD), 81–116 (DNEEEIREAFRVFDKDGNGFVSAAELRHVMTRLGEK), and 117–149 (LSDEEVDEMIRAADTDGDGQVNYEEFVRVLVSK). Ca(2+)-binding residues include aspartate 21, aspartate 23, aspartate 25, cysteine 27, glutamate 32, aspartate 57, aspartate 59, asparagine 61, threonine 63, glutamate 68, aspartate 94, aspartate 96, asparagine 98, glutamate 105, aspartate 130, aspartate 132, aspartate 134, glutamine 136, and glutamate 141.

This sequence belongs to the calmodulin family. In terms of assembly, interacts with MYO10, the interaction is calcium-dependent and essential for MYO10 function in filopodial extension. Expressed in normal mammary, prostate, cervical, and epidermal tissues. It is greatly reduced or undetectable in transformed cells.

Its function is as follows. May function as a specific light chain of unconventional myosin-10 (MYO10), also enhances MYO10 translation, possibly by acting as a chaperone for the emerging MYO10 heavy chain protein. May compete with calmodulin by binding, with different affinities, to cellular substrates. This chain is Calmodulin-like protein 3 (CALML3), found in Homo sapiens (Human).